The primary structure comprises 336 residues: Glyoxylate reductase (336 aa).

Residues 158 to 161 (FGRI), 180 to 182 (SRT), and 239 to 241 (IAR) contribute to the NADP(+) site. Residues R241 and E270 contribute to the active site. H288 functions as the Proton donor in the catalytic mechanism. 288–290 (HIG) lines the NADP(+) pocket.

The protein belongs to the D-isomer specific 2-hydroxyacid dehydrogenase family. GyaR subfamily. As to quaternary structure, homodimer.

It localises to the cytoplasm. The catalysed reaction is glycolate + NAD(+) = glyoxylate + NADH + H(+). This Pyrococcus furiosus (strain ATCC 43587 / DSM 3638 / JCM 8422 / Vc1) protein is Glyoxylate reductase.